Here is a 112-residue protein sequence, read N- to C-terminus: Large ribosomal subunit protein uL18 (112 aa).

Belongs to the universal ribosomal protein uL18 family. In terms of assembly, part of the 50S ribosomal subunit; part of the 5S rRNA/L5/L18/L25 subcomplex. Contacts the 5S and 23S rRNAs.

Functionally, this is one of the proteins that bind and probably mediate the attachment of the 5S RNA into the large ribosomal subunit, where it forms part of the central protuberance. This is Large ribosomal subunit protein uL18 from Thermus thermophilus (strain ATCC BAA-163 / DSM 7039 / HB27).